We begin with the raw amino-acid sequence, 185 residues long: Ribosome-recycling factor (185 aa).

This sequence belongs to the RRF family.

It localises to the cytoplasm. Responsible for the release of ribosomes from messenger RNA at the termination of protein biosynthesis. May increase the efficiency of translation by recycling ribosomes from one round of translation to another. This is Ribosome-recycling factor from Heliobacterium modesticaldum (strain ATCC 51547 / Ice1).